Here is a 171-residue protein sequence, read N- to C-terminus: Adenine phosphoribosyltransferase (171 aa).

The protein belongs to the purine/pyrimidine phosphoribosyltransferase family. Homodimer.

Its subcellular location is the cytoplasm. It carries out the reaction AMP + diphosphate = 5-phospho-alpha-D-ribose 1-diphosphate + adenine. Its pathway is purine metabolism; AMP biosynthesis via salvage pathway; AMP from adenine: step 1/1. In terms of biological role, catalyzes a salvage reaction resulting in the formation of AMP, that is energically less costly than de novo synthesis. This Geotalea uraniireducens (strain Rf4) (Geobacter uraniireducens) protein is Adenine phosphoribosyltransferase.